A 214-amino-acid polypeptide reads, in one-letter code: Adenylate kinase (214 aa).

ATP is bound at residue 10–15 (GAGKGT). The segment at 30–59 (STGDMLRAAVKAGTPLGLEAKKVMDAGQLV) is NMP. AMP-binding positions include T31, R36, 57–59 (QLV), 85–88 (GFPR), and Q92. The tract at residues 122-159 (GRRVHPGSGRVYHVVFNPPKVEGKDDVTGEDLAIRPDD) is LID. Residues R123 and 132-133 (VY) each bind ATP. AMP is bound by residues R156 and R167. Residue Q200 participates in ATP binding.

Belongs to the adenylate kinase family. Monomer.

The protein localises to the cytoplasm. It carries out the reaction AMP + ATP = 2 ADP. It functions in the pathway purine metabolism; AMP biosynthesis via salvage pathway; AMP from ADP: step 1/1. Catalyzes the reversible transfer of the terminal phosphate group between ATP and AMP. Plays an important role in cellular energy homeostasis and in adenine nucleotide metabolism. This Shewanella baltica (strain OS155 / ATCC BAA-1091) protein is Adenylate kinase.